Consider the following 281-residue polypeptide: DegV domain-containing protein SCO2569 (281 aa).

The DegV domain occupies 5–280; that stretch reads VAIVTDSTAY…PGLLGVVVSS (276 aa). Residues T62 and S95 each contribute to the hexadecanoate site.

Its function is as follows. May bind long-chain fatty acids, such as palmitate, and may play a role in lipid transport or fatty acid metabolism. In Streptomyces coelicolor (strain ATCC BAA-471 / A3(2) / M145), this protein is DegV domain-containing protein SCO2569.